Consider the following 89-residue polypeptide: Small ribosomal subunit protein bS20 (89 aa).

Basic and acidic residues predominate over residues Met-1–Asn-11. The disordered stretch occupies residues Met-1–Asn-30.

This sequence belongs to the bacterial ribosomal protein bS20 family.

Binds directly to 16S ribosomal RNA. This chain is Small ribosomal subunit protein bS20, found in Desulfotalea psychrophila (strain LSv54 / DSM 12343).